We begin with the raw amino-acid sequence, 273 residues long: Ribosomal RNA small subunit methyltransferase A (273 aa).

Positions 18, 20, 45, 66, 91, and 113 each coordinate S-adenosyl-L-methionine.

Belongs to the class I-like SAM-binding methyltransferase superfamily. rRNA adenine N(6)-methyltransferase family. RsmA subfamily.

It is found in the cytoplasm. It carries out the reaction adenosine(1518)/adenosine(1519) in 16S rRNA + 4 S-adenosyl-L-methionine = N(6)-dimethyladenosine(1518)/N(6)-dimethyladenosine(1519) in 16S rRNA + 4 S-adenosyl-L-homocysteine + 4 H(+). Specifically dimethylates two adjacent adenosines (A1518 and A1519) in the loop of a conserved hairpin near the 3'-end of 16S rRNA in the 30S particle. May play a critical role in biogenesis of 30S subunits. In Cronobacter sakazakii (strain ATCC BAA-894) (Enterobacter sakazakii), this protein is Ribosomal RNA small subunit methyltransferase A.